A 231-amino-acid chain; its full sequence is Acyl-protein thioesterase 1 (231 aa).

Residues Ser121, Asp178, and His211 each act as charge relay system in the active site.

The protein belongs to the AB hydrolase superfamily. AB hydrolase 2 family.

The protein localises to the cytoplasm. It is found in the nucleus. The enzyme catalyses S-hexadecanoyl-L-cysteinyl-[protein] + H2O = L-cysteinyl-[protein] + hexadecanoate + H(+). In terms of biological role, hydrolyzes fatty acids from S-acylated cysteine residues in proteins with a strong preference for palmitoylated G-alpha proteins over other acyl substrates. Mediates the deacylation of G-alpha proteins such as GPA1 in vivo, but has weak or no activity toward palmitoylated Ras proteins. Has weak lysophospholipase activity in vitro; however such activity may not exist in vivo. The chain is Acyl-protein thioesterase 1 from Candida albicans (strain SC5314 / ATCC MYA-2876) (Yeast).